The chain runs to 447 residues: 3-O-methyltransferase 2 (447 aa).

S-adenosyl-L-methionine contacts are provided by residues 264-265, Asp287, 318-319, and Arg334; these read GG and DF. His338 acts as the Proton acceptor in catalysis.

This sequence belongs to the class I-like SAM-binding methyltransferase superfamily. Cation-independent O-methyltransferase family. COMT subfamily.

Its function is as follows. S-adenosyl-L-methionine-dependent methyltransferase that preferentially catalyzes the methylation of 3-OH phenolic compounds like isovanillic acid and 3-OH-4-Met cinnamic acid. May play a role in promoting lignin degradation by methylating and inactivating free-hydroxyl phenolic compounds, products of lignin cleavage which are known inhibitors of lignin peroxidases. This Phanerochaete chrysosporium (strain RP-78 / ATCC MYA-4764 / FGSC 9002) (White-rot fungus) protein is 3-O-methyltransferase 2.